A 188-amino-acid polypeptide reads, in one-letter code: Large ribosomal subunit protein uL6 (188 aa).

It belongs to the universal ribosomal protein uL6 family.

This chain is Large ribosomal subunit protein uL6 (RPL9), found in Tetrahymena thermophila (strain SB210).